The following is a 482-amino-acid chain: Exodeoxyribonuclease I (482 aa).

Residues 13–194 form the Exonuclease domain; the sequence is LFYDYETFGI…TSDVYATIEL (182 aa). Mg(2+)-binding residues include Asp16, Glu18, and Asp187. Substrate is bound at residue Glu18. The ExoI SH3-like domain occupies 203-351; the sequence is PKLFDFFFKY…LVKNVLLKKN (149 aa). The ExoI C-terminal domain occupies 355–471; that stretch reads NSLNVDLQIY…DLLKYVFKKY (117 aa).

As to quaternary structure, monomer. Interacts with ssb (via C-terminus); this interaction stimulates the exonuclease activity by recruiting the enzyme to its substrate. Mg(2+) is required as a cofactor.

It catalyses the reaction Exonucleolytic cleavage in the 3'- to 5'-direction to yield nucleoside 5'-phosphates.. In terms of biological role, degrades single-stranded DNA (ssDNA) in a highly processive manner. Also functions as a DNA deoxyribophosphodiesterase that releases deoxyribose-phosphate moieties following the cleavage of DNA at an apurinic/apyrimidinic (AP) site by either an AP endonuclease or AP lyase. This is Exodeoxyribonuclease I (sbcB) from Buchnera aphidicola subsp. Schizaphis graminum (strain Sg).